A 337-amino-acid chain; its full sequence is N-acetyl-gamma-glutamyl-phosphate reductase (337 aa).

Cysteine 145 is a catalytic residue.

This sequence belongs to the NAGSA dehydrogenase family. Type 1 subfamily.

The protein resides in the cytoplasm. It carries out the reaction N-acetyl-L-glutamate 5-semialdehyde + phosphate + NADP(+) = N-acetyl-L-glutamyl 5-phosphate + NADPH + H(+). Its pathway is amino-acid biosynthesis; L-arginine biosynthesis; N(2)-acetyl-L-ornithine from L-glutamate: step 3/4. Catalyzes the NADPH-dependent reduction of N-acetyl-5-glutamyl phosphate to yield N-acetyl-L-glutamate 5-semialdehyde. The chain is N-acetyl-gamma-glutamyl-phosphate reductase from Methanosarcina barkeri (strain Fusaro / DSM 804).